The chain runs to 199 residues: Imidazole glycerol phosphate synthase subunit HisH 2 (199 aa).

The region spanning 1–199 (MIAVIDVSGN…NNFLSLESTC (199 aa)) is the Glutamine amidotransferase type-1 domain. The active-site Nucleophile is the Cys-76. Residues His-177 and Glu-179 contribute to the active site.

Heterodimer of HisH and HisF.

The protein localises to the cytoplasm. The catalysed reaction is 5-[(5-phospho-1-deoxy-D-ribulos-1-ylimino)methylamino]-1-(5-phospho-beta-D-ribosyl)imidazole-4-carboxamide + L-glutamine = D-erythro-1-(imidazol-4-yl)glycerol 3-phosphate + 5-amino-1-(5-phospho-beta-D-ribosyl)imidazole-4-carboxamide + L-glutamate + H(+). It catalyses the reaction L-glutamine + H2O = L-glutamate + NH4(+). The protein operates within amino-acid biosynthesis; L-histidine biosynthesis; L-histidine from 5-phospho-alpha-D-ribose 1-diphosphate: step 5/9. IGPS catalyzes the conversion of PRFAR and glutamine to IGP, AICAR and glutamate. The HisH subunit provides the glutamine amidotransferase activity that produces the ammonia necessary to HisF for the synthesis of IGP and AICAR. The protein is Imidazole glycerol phosphate synthase subunit HisH 2 of Legionella pneumophila (strain Paris).